A 375-amino-acid chain; its full sequence is Dual-specificity RNA methyltransferase RlmN (375 aa).

The active-site Proton acceptor is Glu-98. Residues 106-346 (GGKRRTLCVS…VRTTRGDDID (241 aa)) form the Radical SAM core domain. Cys-113 and Cys-349 form a disulfide bridge. The [4Fe-4S] cluster site is built by Cys-120, Cys-124, and Cys-127. S-adenosyl-L-methionine contacts are provided by residues 174 to 175 (GE), Ser-206, 228 to 230 (SLH), and Asn-306. The S-methylcysteine intermediate role is filled by Cys-349.

Belongs to the radical SAM superfamily. RlmN family. Requires [4Fe-4S] cluster as cofactor.

The protein localises to the cytoplasm. The catalysed reaction is adenosine(2503) in 23S rRNA + 2 reduced [2Fe-2S]-[ferredoxin] + 2 S-adenosyl-L-methionine = 2-methyladenosine(2503) in 23S rRNA + 5'-deoxyadenosine + L-methionine + 2 oxidized [2Fe-2S]-[ferredoxin] + S-adenosyl-L-homocysteine. It catalyses the reaction adenosine(37) in tRNA + 2 reduced [2Fe-2S]-[ferredoxin] + 2 S-adenosyl-L-methionine = 2-methyladenosine(37) in tRNA + 5'-deoxyadenosine + L-methionine + 2 oxidized [2Fe-2S]-[ferredoxin] + S-adenosyl-L-homocysteine. Functionally, specifically methylates position 2 of adenine 2503 in 23S rRNA and position 2 of adenine 37 in tRNAs. m2A2503 modification seems to play a crucial role in the proofreading step occurring at the peptidyl transferase center and thus would serve to optimize ribosomal fidelity. The polypeptide is Dual-specificity RNA methyltransferase RlmN (Chromohalobacter salexigens (strain ATCC BAA-138 / DSM 3043 / CIP 106854 / NCIMB 13768 / 1H11)).